The primary structure comprises 48 residues: Histone H4 (48 aa).

Over residues 1 to 14 the composition is skewed to gly residues; that stretch reads MGGKGGKGGKGLGK. The interval 1–23 is disordered; the sequence is MGGKGGKGGKGLGKVGAKKRHSR.

Belongs to the histone H4 family. In terms of assembly, the nucleosome is a histone octamer containing two molecules each of H2A, H2B, H3 and H4 assembled in one H3-H4 heterotetramer and two H2A-H2B heterodimers. The octamer wraps approximately 147 bp of DNA.

It localises to the nucleus. The protein resides in the chromosome. In terms of biological role, core component of nucleosome. Nucleosomes wrap and compact DNA into chromatin, limiting DNA accessibility to the cellular machineries which require DNA as a template. Histones thereby play a central role in transcription regulation, DNA repair, DNA replication and chromosomal stability. DNA accessibility is regulated via a complex set of post-translational modifications of histones, also called histone code, and nucleosome remodeling. The sequence is that of Histone H4 from Blepharisma japonicum.